A 356-amino-acid polypeptide reads, in one-letter code: UDP-3-O-acylglucosamine N-acyltransferase (356 aa).

Catalysis depends on His251, which acts as the Proton acceptor.

It belongs to the transferase hexapeptide repeat family. LpxD subfamily. Homotrimer.

It catalyses the reaction a UDP-3-O-[(3R)-3-hydroxyacyl]-alpha-D-glucosamine + a (3R)-hydroxyacyl-[ACP] = a UDP-2-N,3-O-bis[(3R)-3-hydroxyacyl]-alpha-D-glucosamine + holo-[ACP] + H(+). It participates in bacterial outer membrane biogenesis; LPS lipid A biosynthesis. Its function is as follows. Catalyzes the N-acylation of UDP-3-O-acylglucosamine using 3-hydroxyacyl-ACP as the acyl donor. Is involved in the biosynthesis of lipid A, a phosphorylated glycolipid that anchors the lipopolysaccharide to the outer membrane of the cell. In Ralstonia nicotianae (strain ATCC BAA-1114 / GMI1000) (Ralstonia solanacearum), this protein is UDP-3-O-acylglucosamine N-acyltransferase.